We begin with the raw amino-acid sequence, 973 residues long: Translation initiation factor IF-2 (973 aa).

The segment at 52–388 (PDQEEVKPAA…QAQKPAQPLE (337 aa)) is disordered. Composition is skewed to basic and acidic residues over residues 83–120 (ESRK…DHYK), 128–148 (VPSR…DKAR), 157–172 (QGAR…ERTR), 186–202 (VQQE…RPPF), 210–246 (PQHE…DKGA), 272–288 (RAGE…ETKP), 314–333 (LLDD…EKQK), and 343–360 (KSRE…ERLR). Low complexity predominate over residues 374–386 (AKPQEQAQKPAQP). The region spanning 472–641 (DRPCVVTVMG…LLVAEMSELK (170 aa)) is the tr-type G domain. Residues 481 to 488 (GHVDHGKT) form a G1 region. 481-488 (GHVDHGKT) lines the GTP pocket. Residues 506-510 (GITQH) are G2. The interval 527–530 (DTPG) is G3. Residues 527-531 (DTPGH) and 581-584 (NKID) contribute to the GTP site. The G4 stretch occupies residues 581–584 (NKID). The segment at 617 to 619 (SAL) is G5.

It belongs to the TRAFAC class translation factor GTPase superfamily. Classic translation factor GTPase family. IF-2 subfamily.

The protein localises to the cytoplasm. In terms of biological role, one of the essential components for the initiation of protein synthesis. Protects formylmethionyl-tRNA from spontaneous hydrolysis and promotes its binding to the 30S ribosomal subunits. Also involved in the hydrolysis of GTP during the formation of the 70S ribosomal complex. The protein is Translation initiation factor IF-2 of Pelotomaculum thermopropionicum (strain DSM 13744 / JCM 10971 / SI).